The sequence spans 432 residues: G-protein coupled receptor 22 (432 aa).

At 1–45 the chain is on the cytoplasmic side; that stretch reads MCFSPVLEINMQSESNVTVRDDIEDIDTNMYQPLSYPLSFQVSLT. Residues 46-66 traverse the membrane as a helical segment; the sequence is GFLMLEIVLGLGSNLTVLVLY. The Extracellular portion of the chain corresponds to 67 to 85; the sequence is CMKSNLISSVSNIITMNLH. Residues 86–106 traverse the membrane as a helical segment; that stretch reads VLDVIICVGCIPLTIVILLLS. Residues 107 to 115 lie on the Cytoplasmic side of the membrane; the sequence is LERNTALIC. The helical transmembrane segment at 116 to 136 threads the bilayer; it reads CFHEACVSFASVSTAINVFAI. Topologically, residues 137 to 156 are extracellular; it reads TLDRYDISVKPANRILTMGR. The helical transmembrane segment at 157–177 threads the bilayer; the sequence is AVMLMTSIWIFSFFSFLIPFI. Topologically, residues 178–208 are cytoplasmic; sequence EVNFFSLQSGNAWENKTLLCVSTSEYYTELG. A helical membrane pass occupies residues 209–229; sequence MYYHLLVQIPIFFFTVIVMLI. The Extracellular segment spans residues 230 to 314; that stretch reads TYTKILQALN…ERQKRVFKMS (85 aa). Residues 315-335 traverse the membrane as a helical segment; it reads LLIISTFLLCWTPISVLNTTI. Residues 336-348 lie on the Cytoplasmic side of the membrane; the sequence is LCLGPSDLLVKLR. The chain crosses the membrane as a helical span at residues 349 to 369; sequence LCFLVMAYGTTIFHPLLYAFT. Topologically, residues 370-432 are extracellular; it reads RQKFQKVLKS…KCLVPQVVTD (63 aa).

Belongs to the G-protein coupled receptor 1 family. In terms of tissue distribution, abundant levels detected in the brain. High expression in the heart (at protein level). No detectable expression in other peripheral tissues.

Its subcellular location is the cell membrane. In terms of biological role, orphan G-protein coupled receptor. Seems to act through a G(i)/G(o) mediated pathway. May be involved in ciliogenesis. In Rattus norvegicus (Rat), this protein is G-protein coupled receptor 22.